The sequence spans 51 residues: Large ribosomal subunit protein bL33 (51 aa).

It belongs to the bacterial ribosomal protein bL33 family.

The protein is Large ribosomal subunit protein bL33 of Psychrobacter arcticus (strain DSM 17307 / VKM B-2377 / 273-4).